The following is a 291-amino-acid chain: ATP synthase gamma chain (291 aa).

Belongs to the ATPase gamma chain family. As to quaternary structure, F-type ATPases have 2 components, CF(1) - the catalytic core - and CF(0) - the membrane proton channel. CF(1) has five subunits: alpha(3), beta(3), gamma(1), delta(1), epsilon(1). CF(0) has three main subunits: a, b and c.

The protein resides in the cell inner membrane. Produces ATP from ADP in the presence of a proton gradient across the membrane. The gamma chain is believed to be important in regulating ATPase activity and the flow of protons through the CF(0) complex. This Burkholderia ambifaria (strain MC40-6) protein is ATP synthase gamma chain.